The chain runs to 93 residues: MPKSKVRKKNDFTVSAVSRTPMKVKVGPSSVWFVSLFIGLMLIGLIWLMVFQLAAIGSQAPTALNWMAQLGPWNYAIAFAFMITGLLLTMRWH.

A run of 2 helical transmembrane segments spans residues 31–51 (VWFV…LMVF) and 70–90 (LGPW…LLTM).

This sequence belongs to the CrgA family.

The protein localises to the cell membrane. Functionally, involved in cell division. This chain is Cell division protein CrgA, found in Mycobacterium bovis (strain ATCC BAA-935 / AF2122/97).